A 420-amino-acid chain; its full sequence is Multifunctional CCA protein (420 aa).

Gly-8 and Arg-11 together coordinate ATP. Residues Gly-8 and Arg-11 each contribute to the CTP site. Mg(2+) contacts are provided by Asp-21 and Asp-23. Arg-91, Arg-137, and Arg-140 together coordinate ATP. Residues Arg-91, Arg-137, and Arg-140 each coordinate CTP. Residues 228–334 (TFVHTMLVLQ…LKLFNRLDVW (107 aa)) form the HD domain.

It belongs to the tRNA nucleotidyltransferase/poly(A) polymerase family. Bacterial CCA-adding enzyme type 1 subfamily. Monomer. Can also form homodimers and oligomers. Mg(2+) serves as cofactor. It depends on Ni(2+) as a cofactor.

The catalysed reaction is a tRNA precursor + 2 CTP + ATP = a tRNA with a 3' CCA end + 3 diphosphate. It carries out the reaction a tRNA with a 3' CCA end + 2 CTP + ATP = a tRNA with a 3' CCACCA end + 3 diphosphate. Functionally, catalyzes the addition and repair of the essential 3'-terminal CCA sequence in tRNAs without using a nucleic acid template. Adds these three nucleotides in the order of C, C, and A to the tRNA nucleotide-73, using CTP and ATP as substrates and producing inorganic pyrophosphate. tRNA 3'-terminal CCA addition is required both for tRNA processing and repair. Also involved in tRNA surveillance by mediating tandem CCA addition to generate a CCACCA at the 3' terminus of unstable tRNAs. While stable tRNAs receive only 3'-terminal CCA, unstable tRNAs are marked with CCACCA and rapidly degraded. In Pasteurella multocida (strain Pm70), this protein is Multifunctional CCA protein.